Reading from the N-terminus, the 124-residue chain is Glycine cleavage system H protein (124 aa).

Residues leucine 22 to lysine 104 enclose the Lipoyl-binding domain. Position 63 is an N6-lipoyllysine (lysine 63).

It belongs to the GcvH family. In terms of assembly, the glycine cleavage system is composed of four proteins: P, T, L and H. The cofactor is (R)-lipoate.

In terms of biological role, the glycine cleavage system catalyzes the degradation of glycine. The H protein shuttles the methylamine group of glycine from the P protein to the T protein. This chain is Glycine cleavage system H protein, found in Acinetobacter baumannii (strain SDF).